Reading from the N-terminus, the 94-residue chain is Protein RnfH (94 aa).

This sequence belongs to the UPF0125 (RnfH) family.

This Serratia proteamaculans (strain 568) protein is Protein RnfH.